Reading from the N-terminus, the 296-residue chain is MTDATSGSDPDSTTPVDLTGEDFRDPDALRRRAGVSGDPNFDQHFLIDDRVLDRIPTYLLDSTDTTHILEIGAGTGALTDRLLAVGDTVTVIERDATLAAFLREEFAVMIDDGRLNIIEGDALEVTLPAFTTCISNLPYGISSEILFELLPADCPLIVMVQREFGERMAADPGTDAYGRLSVSAQHYATVEVVETVPPTAFAPEPAVDSALIRAEPRDPDYTVTDETFFLRFVKAVFTQRRKTVRNAIRNTAHISMLDTPDAVVNAADEALLSQRAGDLTPSEFAELATIAAEKGK.

A compositionally biased stretch (polar residues) spans 1-16 (MTDATSGSDPDSTTPV). Residues 1-25 (MTDATSGSDPDSTTPVDLTGEDFRD) are disordered. The S-adenosyl-L-methionine site is built by histidine 44, leucine 46, glycine 72, glutamate 93, aspartate 121, and asparagine 136.

It belongs to the class I-like SAM-binding methyltransferase superfamily. rRNA adenine N(6)-methyltransferase family. RsmA subfamily.

Its subcellular location is the cytoplasm. In terms of biological role, specifically dimethylates two adjacent adenosines in the loop of a conserved hairpin near the 3'-end of 16S rRNA in the 30S particle. May play a critical role in biogenesis of 30S subunits. In Haloquadratum walsbyi (strain DSM 16790 / HBSQ001), this protein is Probable ribosomal RNA small subunit methyltransferase A.